Here is a 617-residue protein sequence, read N- to C-terminus: Protein AsmA (617 aa).

The Cytoplasmic segment spans residues 1-3 (MRR). Residues 4–24 (FLTTLMILLVVLVAGLSALVL) traverse the membrane as a helical segment. Topologically, residues 25–617 (LVNPNDFRDY…KDVKKLLEKM (593 aa)) are periplasmic. The span at 302-319 (TANGENGAAQQGQSQSTL) shows a compositional bias: polar residues. Residues 302–321 (TANGENGAAQQGQSQSTLPR) form a disordered region.

The protein belongs to the AsmA family.

It is found in the cell inner membrane. Could be involved in the assembly of outer membrane proteins. May indirectly influence the assembly of outer membrane proteins, potentially by altering outer membrane fluidity. Inhibits the assembly of mutant forms of outer membrane protein F (OmpF). The polypeptide is Protein AsmA (Escherichia coli (strain K12)).